The sequence spans 86 residues: Large ribosomal subunit protein uL23 (86 aa).

Belongs to the universal ribosomal protein uL23 family. In terms of assembly, part of the 50S ribosomal subunit. Contacts protein L29.

In terms of biological role, binds to 23S rRNA. One of the proteins that surrounds the polypeptide exit tunnel on the outside of the ribosome. The chain is Large ribosomal subunit protein uL23 from Methanothermobacter thermautotrophicus (strain ATCC 29096 / DSM 1053 / JCM 10044 / NBRC 100330 / Delta H) (Methanobacterium thermoautotrophicum).